The primary structure comprises 580 residues: Viral transcription factor IE2 (580 aa).

Positions 1 to 11 (MESSAKRKMDP) are enriched in basic and acidic residues. Disordered regions lie at residues 1–30 (MESS…TPVT) and 99–161 (DSSS…VIIK). Residues 99–133 (DSSSTGPTLTTHSCSVSSAPLNKPTPTSVAVTNTP) show a composition bias toward polar residues. Residues Lys-175 and Lys-180 each participate in a glycyl lysine isopeptide (Lys-Gly) (interchain with G-Cter in SUMO) cross-link. An SUMO-interacting motif 1/SIM1 motif is present at residues 199-202 (CIVI). Phosphoserine; by host CK2 is present on residues Ser-203 and Ser-205. The disordered stretch occupies residues 206 to 335 (EEEQGEEVET…KSKRISELDN (130 aa)). Composition is skewed to low complexity over residues 216-236 (RGAT…TSPT), 259-271 (SSSS…SASD), and 302-317 (AASS…SSGG). Positions 410-413 (IQII) match the SUMO-interacting motif 1/SIM2 motif. The short motif at 501-504 (VDLL) is the SUMO-interacting motif 1/SIM3 element.

Belongs to the HHV-5 IE2 protein family. Interacts with host SUMO-modified form of TATA-binding protein (TBP)-associated factor 12/TAF12 in a SIM-dependent manner; this interaction increases the transactivation activity of IE2. Interacts with host CHAF1A. Interacts with several components of the host transcriptional machinery including TBP, TF2B and CREB1. Interacts with host DNA replication licensing factor MCM3. Interacts with host PLSCR1; this interaction inhibits IE2 transactivating activity. Post-translationally, phosphorylated by host CK2 at Ser-203 and Ser-205; leading to enhanced SUMOylation. In terms of processing, SUMOylated; SUMOylation is enhanced when IE2 is phosphorylated by host CK2. The sumoylation is necessary for efficient replication of the virus and thus for the function of this viral transcription factor.

It localises to the host nucleus. In terms of biological role, stimulates viral early and late gene expression and thus play a crucial role in the regulation of productive infection. Selectively drives host RNA Pol II transcription initiation at a subset of viral early-late and late promoters without substantially affecting Pol II transcription of expressed host genes. Mechanistically, forms a repressive complex at the major immediate-early promoter region involving direct association with host nucleosomes and TBP. Concerning activation, stimulates transcription by binding nearby, but not within, core promoter regions. In addition, activates quiescent cells to reenter the cell cycle and up-regulates several E2F-responsive genes, which are responsible for pushing the cell into S phase. In S-phase, inhibits cellular DNA synthesis and blocks further cell cycle progression. This is Viral transcription factor IE2 (UL122) from Human cytomegalovirus (strain AD169) (HHV-5).